The chain runs to 853 residues: cGMP-dependent protein kinase (853 aa).

Residues 1–29 are autoinhibitory segment; sequence MEEDDNLKKGNERNKKKAIFSNDDFTGED. CNMP-binding domain stretches follow at residues 58–173, 176–275, 295–398, and 418–517; these read VCST…FIDS, VFDM…IVLG, IFKQ…LGNN, and IFRY…LQII. Residues Lys-113, Gly-122, Glu-123, Ala-125, Arg-132, and Ser-133 each coordinate 3',5'-cyclic GMP. 3',5'-cyclic GMP-binding residues include Arg-473, Gly-482, Glu-483, Ala-485, Arg-492, and Thr-493. The region spanning 541–798 is the Protein kinase domain; the sequence is LETERIIGRG…FKDIKDHPFF (258 aa). Residues 547 to 555 and Lys-570 each bind ATP; that span reads IGRGTFGTV. The Proton acceptor role is filled by Asp-664. The 55-residue stretch at 799–853 folds into the AGC-kinase C-terminal domain; sequence SNFNWDKLAGRLLDPPLVSKSETYAEDIDIKQIEEEDAEDDEEPLNDEDNWDIDF. Residues 827–853 are disordered; sequence DIKQIEEEDAEDDEEPLNDEDNWDIDF. A compositionally biased stretch (acidic residues) spans 832–853; the sequence is EEEDAEDDEEPLNDEDNWDIDF.

It belongs to the protein kinase superfamily. AGC Ser/Thr protein kinase family. cGMP subfamily. As to quaternary structure, monomer. Requires Mg(2+) as cofactor. In terms of processing, autophosphorylated.

The protein localises to the cytoplasm. Its subcellular location is the endoplasmic reticulum membrane. It catalyses the reaction L-seryl-[protein] + ATP = O-phospho-L-seryl-[protein] + ADP + H(+). The catalysed reaction is L-threonyl-[protein] + ATP = O-phospho-L-threonyl-[protein] + ADP + H(+). With respect to regulation, activated by cGMP. Not activated by cAMP. cGMP binding allosterically triggers a conformational change at the alpha C-helix of cGMP-binding domain 4, which bridges the regulatory and catalytic domains, causing the capping triad, composed of Arg-484, Gln-532 and Asp-533, to form and stabilize the active conformation. The cGMP-binding domains acts cooperatively to activate PKG. In terms of biological role, serine/threonine protein kinase which acts as a downstream effector of the second messenger cGMP. Controls the release of Ca(2+) from intracellular stores by regulating phosphoinositide biosynthesis. Ca(2+) signals are essential for merozoite and sporozoite invasion and egress from host hepatocytes and erythrocytes, and, in the mosquito vector, for gametocyte activation, and ookinete and sporozoite motility. During the host liver stage, regulates the initial invasion of host hepatocytes by sporozoites by regulating sporozoite motility and microneme exocytosis. Following parasite development in the hepatocytes, required for the release of merosomes, a vesicle containing the mature merozoites. During the asexual blood stage, required for the progression from schizont to the ring stage following merozoite invasion of host erythrocytes and for merozoite egress. Regulates merozoite egress by promoting the release of exonemes and micronemes which contain proteins essential for egress. Phosphorylates CDPK1 predominantly at the late schizont stage; phosphorylation at 'Ser-64' regulates CDPK1 protein-protein interaction and phosphorylation at 'Thr-231' may regulate CDPK1 kinase activity. In the mosquito vector, required for the initiation of gametogenesis induced by xanthurenic acid, specifically the gametocyte differentiation from the crescent-shaped form to the spherical form. Required for the gliding motility of ookinetes to reach and penetrate the midgut epithelium by promoting Ca(2+)-mediated activation of CDPK1 and CDPK4. Also required for microneme secretion in ookinete by promoting Ca(2+)-mediated activation of CDPK3. This is cGMP-dependent protein kinase from Plasmodium falciparum (isolate NF54).